A 178-amino-acid polypeptide reads, in one-letter code: Ribulose bisphosphate carboxylase small subunit, chloroplastic 2 (178 aa).

A chloroplast-targeting transit peptide spans 1 to 54; it reads MASISSTVATVSRAAPAQANMVAPFTGLKSNVAFPATKKANDFSTLPSNGGRVQ.

Belongs to the RuBisCO small chain family. Heterohexadecamer of 8 large and 8 small subunits.

The protein resides in the plastid. The protein localises to the chloroplast. Its function is as follows. RuBisCO catalyzes two reactions: the carboxylation of D-ribulose 1,5-bisphosphate, the primary event in carbon dioxide fixation, as well as the oxidative fragmentation of the pentose substrate. Both reactions occur simultaneously and in competition at the same active site. Although the small subunit is not catalytic it is essential for maximal activity. This chain is Ribulose bisphosphate carboxylase small subunit, chloroplastic 2, found in Flaveria pringlei.